A 402-amino-acid chain; its full sequence is Tryptophan synthase beta chain (402 aa).

Position 92 is an N6-(pyridoxal phosphate)lysine (Lys92).

The protein belongs to the TrpB family. In terms of assembly, tetramer of two alpha and two beta chains. Pyridoxal 5'-phosphate serves as cofactor.

It catalyses the reaction (1S,2R)-1-C-(indol-3-yl)glycerol 3-phosphate + L-serine = D-glyceraldehyde 3-phosphate + L-tryptophan + H2O. It functions in the pathway amino-acid biosynthesis; L-tryptophan biosynthesis; L-tryptophan from chorismate: step 5/5. Functionally, the beta subunit is responsible for the synthesis of L-tryptophan from indole and L-serine. The sequence is that of Tryptophan synthase beta chain from Staphylococcus epidermidis (strain ATCC 35984 / DSM 28319 / BCRC 17069 / CCUG 31568 / BM 3577 / RP62A).